Consider the following 162-residue polypeptide: NADH-quinone oxidoreductase subunit I 2 (162 aa).

4Fe-4S ferredoxin-type domains lie at 52–82 and 93–122; these read LRRY…IEAG and VRYD…EGPN. 8 residues coordinate [4Fe-4S] cluster: Cys-62, Cys-65, Cys-68, Cys-72, Cys-102, Cys-105, Cys-108, and Cys-112.

This sequence belongs to the complex I 23 kDa subunit family. In terms of assembly, NDH-1 is composed of 14 different subunits. Subunits NuoA, H, J, K, L, M, N constitute the membrane sector of the complex. [4Fe-4S] cluster is required as a cofactor.

It localises to the cell inner membrane. The enzyme catalyses a quinone + NADH + 5 H(+)(in) = a quinol + NAD(+) + 4 H(+)(out). In terms of biological role, NDH-1 shuttles electrons from NADH, via FMN and iron-sulfur (Fe-S) centers, to quinones in the respiratory chain. The immediate electron acceptor for the enzyme in this species is believed to be ubiquinone. Couples the redox reaction to proton translocation (for every two electrons transferred, four hydrogen ions are translocated across the cytoplasmic membrane), and thus conserves the redox energy in a proton gradient. The chain is NADH-quinone oxidoreductase subunit I 2 from Rhodopseudomonas palustris (strain BisB5).